Reading from the N-terminus, the 338-residue chain is Ketol-acid reductoisomerase (NADP(+)) (338 aa).

The KARI N-terminal Rossmann domain maps to 1-181 (MKVFYDKDAD…GGGRAGIIET (181 aa)). NADP(+) contacts are provided by residues 24–27 (YGSQ), arginine 47, and serine 52. Histidine 107 is an active-site residue. NADP(+) is bound at residue glycine 133. The 146-residue stretch at 182 to 327 (NFREETETDL…GKLRAMMPWI (146 aa)) folds into the KARI C-terminal knotted domain. The Mg(2+) site is built by aspartate 190, glutamate 194, glutamate 226, and glutamate 230. Serine 251 serves as a coordination point for substrate.

This sequence belongs to the ketol-acid reductoisomerase family. Requires Mg(2+) as cofactor.

The catalysed reaction is (2R)-2,3-dihydroxy-3-methylbutanoate + NADP(+) = (2S)-2-acetolactate + NADPH + H(+). The enzyme catalyses (2R,3R)-2,3-dihydroxy-3-methylpentanoate + NADP(+) = (S)-2-ethyl-2-hydroxy-3-oxobutanoate + NADPH + H(+). It functions in the pathway amino-acid biosynthesis; L-isoleucine biosynthesis; L-isoleucine from 2-oxobutanoate: step 2/4. Its pathway is amino-acid biosynthesis; L-valine biosynthesis; L-valine from pyruvate: step 2/4. Functionally, involved in the biosynthesis of branched-chain amino acids (BCAA). Catalyzes an alkyl-migration followed by a ketol-acid reduction of (S)-2-acetolactate (S2AL) to yield (R)-2,3-dihydroxy-isovalerate. In the isomerase reaction, S2AL is rearranged via a Mg-dependent methyl migration to produce 3-hydroxy-3-methyl-2-ketobutyrate (HMKB). In the reductase reaction, this 2-ketoacid undergoes a metal-dependent reduction by NADPH to yield (R)-2,3-dihydroxy-isovalerate. The chain is Ketol-acid reductoisomerase (NADP(+)) from Cupriavidus metallidurans (strain ATCC 43123 / DSM 2839 / NBRC 102507 / CH34) (Ralstonia metallidurans).